We begin with the raw amino-acid sequence, 461 residues long: Diaboline synthase (461 aa).

Active-site proton acceptor residues include H185 and D400.

Belongs to the plant acyltransferase family. In terms of assembly, monomer.

Its subcellular location is the cytoplasm. The catalysed reaction is 17,18-epoxy-17-hydroxycur-19-ene + acetyl-CoA = diaboline + CoA. Its pathway is alkaloid biosynthesis. Its function is as follows. Acetyltransferase involved in the biosynthesis of curare monoterpene indole alkaloids (MIAs), natural products such as diaboline, a pharmacologically active compound used to regulate blood pressure. Curare alkaloids act as animal glycine receptor antagonists. Catalyzes the conversion of 17,18-epoxy-17-hydroxycur-19-ene (Wieland-Gumlich aldehyde) to diaboline. The polypeptide is Diaboline synthase (Strychnos sp).